We begin with the raw amino-acid sequence, 95 residues long: Integration host factor subunit beta (95 aa).

Positions 52–95 are disordered; the sequence is SLHHRPPRVGRNPKTGESVHLPSRRVPHFKPGKELRDRVNSIKD. Basic and acidic residues predominate over residues 82–95; sequence PGKELRDRVNSIKD.

This sequence belongs to the bacterial histone-like protein family. Heterodimer of an alpha and a beta chain.

This protein is one of the two subunits of integration host factor, a specific DNA-binding protein that functions in genetic recombination as well as in transcriptional and translational control. The protein is Integration host factor subunit beta of Methylococcus capsulatus (strain ATCC 33009 / NCIMB 11132 / Bath).